The following is a 68-amino-acid chain: Conotoxin Pu5.5 (68 aa).

Positions 1–22 (MRCVPVFIILLVLIASAPSVDA) are cleaved as a signal peptide. The propeptide occupies 23–49 (RPQTKDDALASFRDSIKRHLQTLLDAR).

Belongs to the conotoxin T superfamily. In terms of processing, contains 2 disulfide bonds that can be either 'C1-C3, C2-C4' or 'C1-C4, C2-C3', since these disulfide connectivities have been observed for conotoxins with cysteine framework V (for examples, see AC P0DQQ7 and AC P81755). In terms of tissue distribution, expressed by the venom duct.

The protein localises to the secreted. This Conus pulicarius (Flea-bitten cone) protein is Conotoxin Pu5.5.